The following is a 418-amino-acid chain: Probable serine/threonine-protein kinase nek2 (418 aa).

The Protein kinase domain occupies 4–264 (YEILGALGKG…VNELLGYSFI (261 aa)). Residues 10-18 (LGKGSFGVV) and Lys-33 contribute to the ATP site. Asp-135 functions as the Proton acceptor in the catalytic mechanism. Residues 278–363 (QGLKQMDEDL…SNLSLNCNNS (86 aa)) adopt a coiled-coil conformation.

It belongs to the protein kinase superfamily. NEK Ser/Thr protein kinase family. NIMA subfamily.

It catalyses the reaction L-seryl-[protein] + ATP = O-phospho-L-seryl-[protein] + ADP + H(+). The catalysed reaction is L-threonyl-[protein] + ATP = O-phospho-L-threonyl-[protein] + ADP + H(+). Its function is as follows. Involved in centrosome biogenesis. Seems to be required for recruitment of centrosomal material and might be involved in de novo centrosome formation. The chain is Probable serine/threonine-protein kinase nek2 (nek2) from Dictyostelium discoideum (Social amoeba).